Reading from the N-terminus, the 98-residue chain is Protein translation factor SUI1 homolog (98 aa).

It belongs to the SUI1 family.

The sequence is that of Protein translation factor SUI1 homolog from Thermococcus onnurineus (strain NA1).